A 454-amino-acid chain; its full sequence is tRNA modification GTPase MnmE (454 aa).

3 residues coordinate (6S)-5-formyl-5,6,7,8-tetrahydrofolate: Arg-23, Glu-80, and Lys-120. Residues 216–377 enclose the TrmE-type G domain; the sequence is GMKVVIAGRP…LRNHLKQSMG (162 aa). Asn-226 serves as a coordination point for K(+). Residues 226-231, 245-251, 270-273, 335-338, and 358-360 contribute to the GTP site; these read NAGKSS, TDIAGTT, DTAG, NKAD, and SAR. A Mg(2+)-binding site is contributed by Ser-230. The K(+) site is built by Thr-245, Ile-247, and Thr-250. Residue Thr-251 participates in Mg(2+) binding. Lys-454 serves as a coordination point for (6S)-5-formyl-5,6,7,8-tetrahydrofolate.

It belongs to the TRAFAC class TrmE-Era-EngA-EngB-Septin-like GTPase superfamily. TrmE GTPase family. Homodimer. Heterotetramer of two MnmE and two MnmG subunits. It depends on K(+) as a cofactor.

The protein localises to the cytoplasm. In terms of biological role, exhibits a very high intrinsic GTPase hydrolysis rate. Involved in the addition of a carboxymethylaminomethyl (cmnm) group at the wobble position (U34) of certain tRNAs, forming tRNA-cmnm(5)s(2)U34. This is tRNA modification GTPase MnmE from Shigella sonnei (strain Ss046).